The chain runs to 481 residues: Aspartyl/glutamyl-tRNA(Asn/Gln) amidotransferase subunit B (481 aa).

The protein belongs to the GatB/GatE family. GatB subfamily. As to quaternary structure, heterotrimer of A, B and C subunits.

The catalysed reaction is L-glutamyl-tRNA(Gln) + L-glutamine + ATP + H2O = L-glutaminyl-tRNA(Gln) + L-glutamate + ADP + phosphate + H(+). The enzyme catalyses L-aspartyl-tRNA(Asn) + L-glutamine + ATP + H2O = L-asparaginyl-tRNA(Asn) + L-glutamate + ADP + phosphate + 2 H(+). Allows the formation of correctly charged Asn-tRNA(Asn) or Gln-tRNA(Gln) through the transamidation of misacylated Asp-tRNA(Asn) or Glu-tRNA(Gln) in organisms which lack either or both of asparaginyl-tRNA or glutaminyl-tRNA synthetases. The reaction takes place in the presence of glutamine and ATP through an activated phospho-Asp-tRNA(Asn) or phospho-Glu-tRNA(Gln). This chain is Aspartyl/glutamyl-tRNA(Asn/Gln) amidotransferase subunit B, found in Carboxydothermus hydrogenoformans (strain ATCC BAA-161 / DSM 6008 / Z-2901).